The following is a 374-amino-acid chain: Protein STRICTOSIDINE SYNTHASE-LIKE 10 (374 aa).

The N-terminal stretch at 1 to 18 is a signal peptide; sequence MTMMIITVFLTVIAAVLA. A glycan (N-linked (GlcNAc...) asparagine) is linked at Asn50.

It belongs to the strictosidine synthase family.

The protein resides in the vacuole. The protein is Protein STRICTOSIDINE SYNTHASE-LIKE 10 of Arabidopsis thaliana (Mouse-ear cress).